The following is a 62-amino-acid chain: Short neurotoxin 2 (62 aa).

The segment at Met1–Gly20 is disordered. 4 disulfides stabilise this stretch: Cys3–Cys24, Cys17–Cys41, Cys43–Cys54, and Cys55–Cys60.

Belongs to the three-finger toxin family. Short-chain subfamily. Type I alpha-neurotoxin sub-subfamily. In terms of tissue distribution, expressed by the venom gland.

The protein resides in the secreted. Binds to muscle nicotinic acetylcholine receptor (nAChR) and inhibit acetylcholine from binding to the receptor, thereby impairing neuromuscular transmission. The polypeptide is Short neurotoxin 2 (Oxyuranus scutellatus scutellatus (Australian taipan)).